Reading from the N-terminus, the 86-residue chain is U-myrmeciitoxin(01)-Mg1a (86 aa).

The N-terminal stretch at 1 to 26 (MKLLYLLLTLAIIFVLTIVHAPNVEA) is a signal peptide. The propeptide occupies 27–52 (KALADPESDAVGFADAFGDADAEATG). Leu85 carries the post-translational modification Leucine amide.

Belongs to the formicidae venom precursor-01 superfamily. Expressed by the venom gland. This toxin is detected along the entire venom gland, as well as in the venom reservoir, the venom duct and in the venom. No toxin are detected in the Dufour's gland.

It is found in the secreted. The protein localises to the target cell membrane. Functionally, toxin that may interact with target cell membranes, producing a concentration-dependent leak in ion conductance, possibly via multimeric pore formation. It produces an immediate sharp increase of calcium concentration in all DRG neurons. This influx in calcium stabilizes without resulting in any observable dye leakage, showing that the effect is not simply cytolytic. This toxin may be one of the major contributors to the pain associated with envenomation. The toxin also displays a weak cytotoxicity (on HEK cells) and some antimicrobial activity (MIC=2.5 uM on C.neoformans (var. grubii), MIC=10.2 uM on S.aureus), but is not hemolytic to human erythtrocytes. In vivo, intraplantar injection into mice causes spontaneous nocifensive behavior (licking, flinching, or shaking of the paw), which lasts 5-7 minutes (10 and 100 uM tested). Mechanical and heat hypoalgesia are observed at 20 and 25 minutes after injection (highest dose tested of 100 uM). In vivo, injection into crickets (A.domesticus) causes an immediate, dose-dependent, reversible and nonlethal incapacitation that lasts about 53 minutes at the highest dose tested (60 ug/g). The polypeptide is U-myrmeciitoxin(01)-Mg1a (Myrmecia gulosa (Red bulldog ant)).